The chain runs to 427 residues: UPF0229 protein YeaH (427 aa).

Positions 79 to 90 (NDHFIQNDRIER) are enriched in basic and acidic residues. The interval 79 to 110 (NDHFIQNDRIERPQGGGGGSGSGQGQASQDGE) is disordered. A compositionally biased stretch (gly residues) spans 92–102 (QGGGGGSGSGQ).

The protein belongs to the UPF0229 family.

This chain is UPF0229 protein YeaH, found in Salmonella paratyphi B (strain ATCC BAA-1250 / SPB7).